The following is an 880-amino-acid chain: Dynamin-like protein A (880 aa).

Residues 1–124 (MSVFKKKDKS…QVELERKRRD (124 aa)) form a disordered region. Residues 8 to 20 (DKSDDKKKKHDEE) are compositionally biased toward basic and acidic residues. Polar residues predominate over residues 22–31 (PQGTFQPASQ). The span at 32 to 68 (STSNTNLNSLASSVNNGASVGSTNGSTPNNSNGSTPT) shows a compositional bias: low complexity. The stretch at 69–152 (YNHNNSAEEL…NEQVEISSLE (84 aa)) forms a coiled coil. Composition is skewed to basic and acidic residues over residues 77–94 (ELEK…KSEL) and 103–124 (KKKE…KRRD). The 288-residue stretch at 191 to 478 (AVSHPEIVFV…VWKSYQDTIP (288 aa)) folds into the Dynamin-type G domain. Residues 201–208 (GPRSSGKS) form a G1 motif region. Position 201–208 (201–208 (GPRSSGKS)) interacts with GTP. The tract at residues 227 to 240 (IVGVGGSNANGCSK) is G2 motif. The interval 315–318 (DSPG) is G3 motif. GTP is bound by residues 315–319 (DSPGL) and 380–383 (TKFH). A G4 motif region spans residues 380 to 383 (TKFH). Residues 413–416 (LPNH) form a G5 motif region. Residues 479–509 (RILKHLRSKRQTAEATLNELQKQSSSLDSTK) are a coiled coil. A compositionally biased stretch (polar residues) spans 532 to 543 (TSEGNPSANGQT). The tract at residues 532–551 (TSEGNPSANGQTLDEEKSQQ) is disordered. Residues 824–861 (SNEQLEQLFEVQATREQLKQEEKKQQQILEKYSQIDEQ) adopt a coiled-coil conformation.

The protein belongs to the TRAFAC class dynamin-like GTPase superfamily. Dynamin/Fzo/YdjA family.

The protein resides in the cytoplasm. Its subcellular location is the cleavage furrow. It carries out the reaction GTP + H2O = GDP + phosphate + H(+). Functionally, involved in cytokinesis. May hydrolyze GTP. This is Dynamin-like protein A (dlpA) from Dictyostelium discoideum (Social amoeba).